The primary structure comprises 617 residues: MFPHLKGHGQRVNLQLLQEAACRELLQQLDRIEGSKVIVLDETMIGPLDLVTRPKLFADRGIRLLALKPELHLPREVANVVYVMRPRVALMEQLAAHVKAGGRAAAGRQYHILFAPRRSCLCVSQLEVSGVLGSFGNIEELAWNYLPLDVDLVSMEMPNAFRDVSVDGDTSSLYQAAVGLVQLQRLYGRIPKIYGKGEFAHRVWEHAKQLGRDERTLYNGDKGVVDQLILLDRSIDLLSPLATQLTYEGLIDEFYGIRQNKLTLPAENFPSDGALPGGGGSGPRVEESQSLLGDTEKKTILLHSGEQLYAELRNKHFNEVTKLLARKAREIHVQMHATSQDKSVQEIKSFVENLLPQLMAQKKATSEHTAIAGLLHEQVNAVRFADDLAAEQEFMVCADIDKPSAYIEDLIACRVELNRVLRLICMQCHAASGFKEKLLNHYKRELVHVYGLEVLLTISNLEKSGLLHLQTESRAYSVLRKTLHLTVDDNVEIEPKDISYVHSFYAPLTARIVEHSLKPLGWQTLKSQINNLPGPTFEDFQAQLVGIGGRHTVTTVSEGSLLNVPRVVLVCFVGGCTFAEIAALRFLAAQEDNNVEFLIATTKVVNKHSFLDSLMSS.

Residues 268-287 are disordered; that stretch reads NFPSDGALPGGGGSGPRVEE.

This sequence belongs to the STXBP/unc-18/SEC1 family. In terms of assembly, component of the class C core vacuole/endosome tethering (CORVET) complex composed of at least Vps8, dor/Vps18, car/Vps33A and Vps16A; unlike in other species, Vps11 is not part of the Drosophila complex. Due to the reduced number of components the Drosophila CORVET complex is often referred to as the miniCORVET complex. Interacts with ema. Component of the homotypic fusion and vacuole protein sorting (HOPS) complex, composed of Vps16A, car/Vps33A, dor/Vps18, Vps39, Vps11 and lt/Vps41. The tethering complex core made up of Vps16A, car/Vps33A and dor/Vps18 and shared by both HOPS and CORVET, preferentially associates with CORVET specific Vps8 over HOPS specific lt/Vps41. Interacts with Syx17 (via SNARE domain); the interaction requires Vps16A, may involve additional components of the HOPS complex and may promote assembly of the Syx17-Snap29-Vamp7 trans-SNARE complex.

It is found in the early endosome. The protein localises to the late endosome membrane. It localises to the lysosome membrane. Its function is as follows. Core component of the class C core vacuole/endosome tethering (CORVET) and the homotypic fusion and vacuole protein sorting (HOPS) tethering complexes involved in endo-lysosomal vesicle trafficking and lysosome biogenesis. The CORVET complex facilitates docking and fusion of endosomal vesicles during endosome maturation, acts upstream of HOPS, but is not involved in autophagic flux. The CORVET complex may cooperate with the early endosomal tether Rbsn-5 to mediate endosomal fusion. The HOPS complex facilitates docking and fusion of lysosomes with late endosomes and several other types of vesicles. The HOPS complex is also involved in autophagy and crinophagy (the elimination of unused secretory granules through their fusion with lysosomes). The HOPS complex probably instigates autophagosome-lysosome fusion by binding autophagosome associated Syx17/syntaxin 17 and promoting assembly of the trans-SNARE complex. Independent of Syx17/syntaxin 17 HOPS is involved in biosynthetic transport to lysosomes and lysosome-related organelles such as eye-pigment granules. Required for endocytic degradation of boss/bride of sevenless and N/Notch in developing ommatidia. The protein is Vacuolar protein sorting-associated protein 33A of Drosophila melanogaster (Fruit fly).